Here is a 94-residue protein sequence, read N- to C-terminus: Small ribosomal subunit protein bS18 (94 aa).

Low complexity predominate over residues 1–12 (MSEQNSRPQNSE). A disordered region spans residues 1–29 (MSEQNSRPQNSERPQRSRRPQGGPRRRRK). A compositionally biased stretch (basic residues) spans 16 to 29 (RSRRPQGGPRRRRK).

This sequence belongs to the bacterial ribosomal protein bS18 family. In terms of assembly, part of the 30S ribosomal subunit. Forms a tight heterodimer with protein bS6.

Binds as a heterodimer with protein bS6 to the central domain of the 16S rRNA, where it helps stabilize the platform of the 30S subunit. This is Small ribosomal subunit protein bS18 from Leuconostoc mesenteroides subsp. mesenteroides (strain ATCC 8293 / DSM 20343 / BCRC 11652 / CCM 1803 / JCM 6124 / NCDO 523 / NBRC 100496 / NCIMB 8023 / NCTC 12954 / NRRL B-1118 / 37Y).